We begin with the raw amino-acid sequence, 502 residues long: Cytochrome P450 71B10 (502 aa).

The helical transmembrane segment at 1 to 21 threads the bilayer; sequence MTVLWFVSLILLISILLVAVK. Position 443 (Cys-443) interacts with heme.

The protein belongs to the cytochrome P450 family. Heme is required as a cofactor.

It is found in the membrane. This is Cytochrome P450 71B10 (CYP71B10) from Arabidopsis thaliana (Mouse-ear cress).